The primary structure comprises 496 residues: DNA-dependent metalloprotease SPRTN (496 aa).

M1 carries the N-acetylmethionine modification. The 168-residue stretch at 45–212 (LQALFLQFND…KTCGGTYIKI (168 aa)) folds into the SprT-like domain. Position 111 (H111) interacts with Zn(2+). E112 is an active-site residue. Residues H115 and H130 each contribute to the Zn(2+) site. K230 is modified (N6-acetyllysine). The SHP-box signature appears at 253 to 261 (FSGKGYVLG). S268 is subject to Phosphoserine. K303 is covalently cross-linked (Glycyl lysine isopeptide (Lys-Gly) (interchain with G-Cter in SUMO2)). The PIP-box signature appears at 326-333 (QSVLSSYF). Residue K342 forms a Glycyl lysine isopeptide (Lys-Gly) (interchain with G-Cter in SUMO2); alternate linkage. K342 participates in a covalent cross-link: Glycyl lysine isopeptide (Lys-Gly) (interchain with G-Cter in ubiquitin); alternate. The disordered stretch occupies residues 346 to 459 (NVNGSPVKSG…STPRSSGGQR (114 aa)). K361 is covalently cross-linked (Glycyl lysine isopeptide (Lys-Gly) (interchain with G-Cter in SUMO2)). A compositionally biased stretch (low complexity) spans 382–403 (SSKVTAPASATVTSAAGTSAAI). S383 carries the phosphoserine modification. Residues 412 to 423 (DQFLNKRPRLED) carry the Nuclear localization signal motif. Composition is skewed to polar residues over residues 426-437 (ALNNIKEQTQSG) and 445-457 (RPTAISTPRSSGG). Residue K431 forms a Glycyl lysine isopeptide (Lys-Gly) (interchain with G-Cter in SUMO2) linkage. Residues 461 to 488 (LVNCPVCQGVVLESQINEHLDRCLEGSK) form a UBZ4-type zinc finger. Residues C464, C467, H479, and C483 each coordinate Zn(2+).

This sequence belongs to the Spartan family. Homodimer. Interacts (VIA PIP-box) with PCNA (when ubiquitinated). Interacts (via its SHP-box) with VCP/p97. Interacts with RAD18. Interacts with KCTD13 and POLD3. Zn(2+) is required as a cofactor. Post-translationally, autocatalytically cleaved in response to double-stranded DNA-binding: autocatalytic cleavage takes place in trans and leads to inactivation. In terms of processing, monoubiquitinated; monoubiquitination promotes exclusion from chromatin. Deubiquitinated by VCPIP1: deubiquitination is required for subsequent acetylation and recruitment to chromatin and DNA damage sites. Acetylated following deubiquitination by VCPIP1, leading to recruitment to chromatin and DNA damage sites. Post-translationally, phosphorylation by CHEK1 promotes recruitment to chromatin.

The protein resides in the nucleus. It is found in the chromosome. Its activity is regulated as follows. DNA-binding activates the protease activity: single-stranded DNA-binding specifically activates ability to cleave covalent DNA-protein cross-links (DPCs). In contrast, double-stranded DNA-binding specifically activates autocatalytic cleavage, and subsequent inactivation. In terms of biological role, DNA-dependent metalloendopeptidase that mediates the proteolytic cleavage of covalent DNA-protein cross-links (DPCs) during DNA synthesis, thereby playing a key role in maintaining genomic integrity. DPCs are highly toxic DNA lesions that interfere with essential chromatin transactions, such as replication and transcription, and which are induced by reactive agents, such as UV light or formaldehyde. Associates with the DNA replication machinery and specifically removes DPCs during DNA synthesis. Catalyzes proteolytic cleavage of the HMCES DNA-protein cross-link following unfolding by the BRIP1/FANCJ helicase. Acts as a pleiotropic protease for DNA-binding proteins cross-linked with DNA, such as TOP1, TOP2A, histones H3 and H4. Mediates degradation of DPCs that are not ubiquitinated, while it is not able to degrade ubiquitinated DPCs. SPRTN activation requires polymerase collision with DPCs followed by helicase bypass of DPCs. Involved in recruitment of VCP/p97 to sites of DNA damage. Also acts as an activator of CHEK1 during normal DNA replication by mediating proteolytic cleavage of CHEK1, thereby promoting CHEK1 removal from chromatin and subsequent activation. Does not activate CHEK1 in response to DNA damage. May also act as a 'reader' of ubiquitinated PCNA: recruited to sites of UV damage and interacts with ubiquitinated PCNA and RAD18, the E3 ubiquitin ligase that monoubiquitinates PCNA. Facilitates chromatin association of RAD18 and is required for efficient PCNA monoubiquitination, promoting a feed-forward loop to enhance PCNA ubiquitination and translesion DNA synthesis. The protein is DNA-dependent metalloprotease SPRTN of Rattus norvegicus (Rat).